The sequence spans 472 residues: MNAVANAASFDDHKVADLSLAGWGRKEIAIAETEMPGLMAIREEYRAAQPLKGARIAGSLHMTIQTAVLIETLVALGAEVRWASCNIFSTQDHAAAAIAADGIPVFAYKGESLDDYWEYTHRILEWPGDVGPNMILDDGGDATLLVTLGARAEKDASLLANPTCEEEEVLFAAIRKRLAAKPGWYSRIQAGIKGVTEETTTGVHRLYEMQAKGRLPFPAINVNDSVTKSKFDNLYGCRESLVDGIKRATDVMIAGKIAVVLGYGDVGKGCAQSLRGLGATVWITEIDPICALQAAMEGYRVVTMDEACDKADIFVTATGNVGVITHDHMVKMKDQAIVCNIGHFDSEIEVAAMRQYTWENIKPQVDHIVLPNGRRIILLAEGRLVNLGCATGHPSFVMSNSFTNQTLAQIELFCHGAKYENKVYVLPKHLDEKVARLHLKKIGARLTELSDEQAAYIGVPKEGPYKPDHYRY.

Residues Thr-63, Asp-138, and Glu-198 each contribute to the substrate site. 199–201 contacts NAD(+); it reads TTT. Substrate-binding residues include Lys-228 and Asp-232. Residues Asn-233, 262–267, Glu-285, Asn-320, 341–343, and Asn-386 each bind NAD(+); these read GYGDVG and IGH.

The protein belongs to the adenosylhomocysteinase family. NAD(+) is required as a cofactor.

The protein localises to the cytoplasm. The enzyme catalyses S-adenosyl-L-homocysteine + H2O = L-homocysteine + adenosine. Its pathway is amino-acid biosynthesis; L-homocysteine biosynthesis; L-homocysteine from S-adenosyl-L-homocysteine: step 1/1. May play a key role in the regulation of the intracellular concentration of adenosylhomocysteine. The protein is Adenosylhomocysteinase of Methylococcus capsulatus (strain ATCC 33009 / NCIMB 11132 / Bath).